The following is a 436-amino-acid chain: Trigger factor (436 aa).

Positions 161 to 246 (EDQLNIDFVG…VNTVSEPKLP (86 aa)) constitute a PPIase FKBP-type domain.

This sequence belongs to the FKBP-type PPIase family. Tig subfamily.

Its subcellular location is the cytoplasm. It carries out the reaction [protein]-peptidylproline (omega=180) = [protein]-peptidylproline (omega=0). Its function is as follows. Involved in protein export. Acts as a chaperone by maintaining the newly synthesized protein in an open conformation. Functions as a peptidyl-prolyl cis-trans isomerase. This is Trigger factor from Pseudomonas syringae pv. syringae (strain B728a).